The primary structure comprises 374 residues: Chaperone protein DnaJ (374 aa).

In terms of domain architecture, J spans 5-70 (DYYEVLGVAR…DKRARYDRFG (66 aa)). Residues 135-213 (GDEVTLRLPK…CKGSGILQQV (79 aa)) form a CR-type zinc finger. Zn(2+) contacts are provided by Cys-148, Cys-151, Cys-165, Cys-168, Cys-187, Cys-190, Cys-201, and Cys-204. CXXCXGXG motif repeat units follow at residues 148-155 (CDECNGSG), 165-172 (CRHCGGNG), 187-194 (CPVCRGEG), and 201-208 (CPKCKGSG).

It belongs to the DnaJ family. Homodimer. The cofactor is Zn(2+).

It is found in the cytoplasm. In terms of biological role, participates actively in the response to hyperosmotic and heat shock by preventing the aggregation of stress-denatured proteins and by disaggregating proteins, also in an autonomous, DnaK-independent fashion. Unfolded proteins bind initially to DnaJ; upon interaction with the DnaJ-bound protein, DnaK hydrolyzes its bound ATP, resulting in the formation of a stable complex. GrpE releases ADP from DnaK; ATP binding to DnaK triggers the release of the substrate protein, thus completing the reaction cycle. Several rounds of ATP-dependent interactions between DnaJ, DnaK and GrpE are required for fully efficient folding. Also involved, together with DnaK and GrpE, in the DNA replication of plasmids through activation of initiation proteins. In Nitratidesulfovibrio vulgaris (strain DSM 19637 / Miyazaki F) (Desulfovibrio vulgaris), this protein is Chaperone protein DnaJ.